The primary structure comprises 129 residues: Snaclec rhodocetin subunit beta (129 aa).

Residues 3–125 (RCPTTWSASK…EEKNAFLCKF (123 aa)) enclose the C-type lectin domain. Disulfide bonds link Cys-4–Cys-15, Cys-32–Cys-123, and Cys-98–Cys-115.

In terms of assembly, heterotetramer of subunit alpha, beta, gamma and delta; only the gamma and the delta subunits are disulfide-linked. Alpha-beta heterodimer and gamma-delta heterodimer associate orthogonally, giving a cruciform conformation. This heterotetramer may covalently dimerizes thanks to the gamma subunit. Expressed by the venom gland.

Its subcellular location is the secreted. Potent inhibitor of collagen-induced platelet aggregation. It acts by binding to the integrin alpha2A domain and blocks collagen binding to integrin alpha-2/beta-1 (ITGA2/ITGB1). The gamma/delta subunits mainly contribute to this activity. The sequence is that of Snaclec rhodocetin subunit beta from Calloselasma rhodostoma (Malayan pit viper).